Consider the following 66-residue polypeptide: uncharacterized protein (66 aa).

A helical transmembrane segment spans residues 32–49 (WAFSLLIAGSAFLWIYMR).

The protein localises to the membrane. This is an uncharacterized protein from Bacillus subtilis (strain 168).